We begin with the raw amino-acid sequence, 131 residues long: Small ribosomal subunit protein uS8 (131 aa).

It belongs to the universal ribosomal protein uS8 family. As to quaternary structure, part of the 30S ribosomal subunit. Contacts proteins S5 and S12.

Functionally, one of the primary rRNA binding proteins, it binds directly to 16S rRNA central domain where it helps coordinate assembly of the platform of the 30S subunit. The protein is Small ribosomal subunit protein uS8 of Chlorobium phaeovibrioides (strain DSM 265 / 1930) (Prosthecochloris vibrioformis (strain DSM 265)).